A 219-amino-acid polypeptide reads, in one-letter code: Large ribosomal subunit protein uL3 (219 aa).

The tract at residues 133-153 is disordered; it reads GRASHGNSRSHNVPGSIGMAQ. Glutamine 153 is modified (N5-methylglutamine).

This sequence belongs to the universal ribosomal protein uL3 family. Part of the 50S ribosomal subunit. Forms a cluster with proteins L14 and L19. Methylated by PrmB.

Its function is as follows. One of the primary rRNA binding proteins, it binds directly near the 3'-end of the 23S rRNA, where it nucleates assembly of the 50S subunit. This chain is Large ribosomal subunit protein uL3, found in Burkholderia mallei (strain NCTC 10247).